A 65-amino-acid chain; its full sequence is Small, acid-soluble spore protein H 3 (65 aa).

This sequence belongs to the SspH family.

The protein resides in the spore core. This is Small, acid-soluble spore protein H 3 from Geobacillus thermodenitrificans (strain NG80-2).